The chain runs to 156 residues: Cell division protein SepF (156 aa).

Positions 23 to 36 are enriched in basic and acidic residues; that stretch reads SYEKEQTDMKKQQD. The segment at 23 to 49 is disordered; it reads SYEKEQTDMKKQQDPPEQQDVTFPKAQ.

It belongs to the SepF family. In terms of assembly, homodimer. Interacts with FtsZ.

It localises to the cytoplasm. Functionally, cell division protein that is part of the divisome complex and is recruited early to the Z-ring. Probably stimulates Z-ring formation, perhaps through the cross-linking of FtsZ protofilaments. Its function overlaps with FtsA. The sequence is that of Cell division protein SepF from Bacillus anthracis (strain CDC 684 / NRRL 3495).